Reading from the N-terminus, the 346-residue chain is Putative glycosyltransferase HI_0523 (346 aa).

The protein belongs to the glycosyltransferase 9 family.

This chain is Putative glycosyltransferase HI_0523, found in Haemophilus influenzae (strain ATCC 51907 / DSM 11121 / KW20 / Rd).